Reading from the N-terminus, the 98-residue chain is Integration host factor subunit alpha (98 aa).

The tract at residues 50–71 (GNFDLRDKNQRPGRNPKTGEDI) is disordered.

It belongs to the bacterial histone-like protein family. Heterodimer of an alpha and a beta chain.

Functionally, this protein is one of the two subunits of integration host factor, a specific DNA-binding protein that functions in genetic recombination as well as in transcriptional and translational control. The chain is Integration host factor subunit alpha from Proteus mirabilis (strain HI4320).